The following is a 655-amino-acid chain: Spastin (655 aa).

At 1 to 58 (MLFDLINSFLKNGINNSNNNNNNNNNKNNFYNSLEDDDYLLNNQTTKVSLYLYFFIFA) the chain is on the cytoplasmic side. An intramembrane region (helical) is located at residues 59-79 (FMFLVVDLIMLYYKHRENIES). The Cytoplasmic segment spans residues 80 to 655 (RETDLSLKLN…EKWNQKFGTI (576 aa)). Low complexity predominate over residues 102-140 (KSSPTTSTTTTTITPTTTSSSQLRQPSTPKTTTKTINSP). The tract at residues 102 to 151 (KSSPTTSTTTTTITPTTTSSSQLRQPSTPKTTTKTINSPPSTPKSPPPLP) is disordered. Over residues 141–151 (PSTPKSPPPLP) the composition is skewed to pro residues. Positions 169-232 (LNEAKSQIDS…KRAEYLKNEL (64 aa)) constitute an MIT domain. The interval 261–325 (EQQQQQQQQS…TITSPGNKYG (65 aa)) is disordered. The span at 262 to 320 (QQQQQQQQSSSTYRNSLNLSSSKSNSTINNRHSISSLSSLNSTTATTTTPSNTSTITSP) shows a compositional bias: low complexity. 424 to 431 (GPPGNGKT) contacts ATP.

It belongs to the AAA ATPase family. Spastin subfamily. In terms of assembly, homohexamer. The homohexamer is stabilized by ATP-binding. The homohexamer may adopt a ring conformation through which microtubules pass prior to being severed. Interacts with microtubules.

The protein resides in the membrane. It is found in the cytoplasm. It localises to the cytoskeleton. Its subcellular location is the microtubule organizing center. The protein localises to the centrosome. The enzyme catalyses n ATP + n H2O + a microtubule = n ADP + n phosphate + (n+1) alpha/beta tubulin heterodimers.. Functionally, ATP-dependent microtubule severing protein. Microtubule severing may promote reorganization of cellular microtubule arrays and the release of microtubules from the microtubule organizing center following nucleation. This Dictyostelium discoideum (Social amoeba) protein is Spastin.